We begin with the raw amino-acid sequence, 361 residues long: Phosphoserine aminotransferase (361 aa).

R42 contacts L-glutamate. Residues 76 to 77 (AS), W102, T152, D172, and Q195 each bind pyridoxal 5'-phosphate. K196 is subject to N6-(pyridoxal phosphate)lysine. 237–238 (NT) contributes to the pyridoxal 5'-phosphate binding site.

Belongs to the class-V pyridoxal-phosphate-dependent aminotransferase family. SerC subfamily. In terms of assembly, homodimer. The cofactor is pyridoxal 5'-phosphate.

Its subcellular location is the cytoplasm. It carries out the reaction O-phospho-L-serine + 2-oxoglutarate = 3-phosphooxypyruvate + L-glutamate. It catalyses the reaction 4-(phosphooxy)-L-threonine + 2-oxoglutarate = (R)-3-hydroxy-2-oxo-4-phosphooxybutanoate + L-glutamate. Its pathway is amino-acid biosynthesis; L-serine biosynthesis; L-serine from 3-phospho-D-glycerate: step 2/3. In terms of biological role, catalyzes the reversible conversion of 3-phosphohydroxypyruvate to phosphoserine and of 3-hydroxy-2-oxo-4-phosphonooxybutanoate to phosphohydroxythreonine. This chain is Phosphoserine aminotransferase, found in Halalkalibacterium halodurans (strain ATCC BAA-125 / DSM 18197 / FERM 7344 / JCM 9153 / C-125) (Bacillus halodurans).